The primary structure comprises 117 residues: Hydrogenase maturation factor HypA (117 aa).

Ni(2+) is bound at residue histidine 2. Cysteine 73, cysteine 76, cysteine 89, and cysteine 92 together coordinate Zn(2+).

Belongs to the HypA/HybF family.

In terms of biological role, involved in the maturation of [NiFe] hydrogenases. Required for nickel insertion into the metal center of the hydrogenase. The sequence is that of Hydrogenase maturation factor HypA from Pelodictyon phaeoclathratiforme (strain DSM 5477 / BU-1).